Reading from the N-terminus, the 169-residue chain is PTS system glucose-specific EIIA component (169 aa).

Residues 39 to 143 (DVVFAEKIVG…STLTPVVISN (105 aa)) form the PTS EIIA type-1 domain. Zn(2+) contacts are provided by His76 and His91. The Tele-phosphohistidine intermediate; for EIIA activity role is filled by His91. His91 carries the phosphohistidine; by HPr modification.

In terms of assembly, heterodimer with glycerol kinase (glpk). It depends on Zn(2+) as a cofactor.

It is found in the cytoplasm. Functionally, the phosphoenolpyruvate-dependent sugar phosphotransferase system (sugar PTS), a major carbohydrate active transport system, catalyzes the phosphorylation of incoming sugar substrates concomitantly with their translocation across the cell membrane. The enzyme II complex composed of PtsG and Crr is involved in glucose transport. This is PTS system glucose-specific EIIA component (crr) from Escherichia coli O6:H1 (strain CFT073 / ATCC 700928 / UPEC).